A 261-amino-acid chain; its full sequence is MRHLRFLPQEIISSETGIEILEFVVNTLMGDDPEPPVQPFDPPTLHDLYDLEVDGPEDPNEGAVNGFFTDSMLLAADEGLDINPPPETLVTPGVVVESGRGGKKLPDLGAAEMDLRCYEEGFPPSDDEDGETEQSIHTAVNEGVKAASDVFKLDCPELPGHGCKSCEFHRNNTGMKELLCSLCYMRMHCHFIYSPVSDDESPSPDSTTSPPEIQAPAPANVCKPIPVKPKPGKRPAVDKLEDLLEGGDGPLDLSTRKLPRQ.

The tract at residues 43–51 (PTLHDLYDL) is interaction with RB1 in competition with E2F1. An interaction with UBE2I region spans residues 78-149 (EGLDINPPPE…VNEGVKAASD (72 aa)). The short motif at 106–110 (PDLGA) is the PXLXP motif, interaction with host ZMYND11 element. The LXCXE motif, interaction with host RB1 and TMEM173/STING motif lies at 115-119 (LRCYE). The segment at 163-183 (CKSCEFHRNNTGMKELLCSLC) is a zinc-finger region. The segment at 197–261 (SDDESPSPDS…DLSTRKLPRQ (65 aa)) is disordered. Over residues 203–212 (SPDSTTSPPE) the composition is skewed to low complexity. Positions 250 to 254 (PLDLS) match the PXDLS motif, CTBP-binding motif. Positions 256–261 (RKLPRQ) match the Nuclear localization signal motif.

This sequence belongs to the adenoviridae E1A protein family. Interacts with host UBE2I; this interaction interferes with polySUMOylation. Interacts with host RB1; this interaction induces the aberrant dissociation of RB1-E2F1 complex thereby disrupting the activity of RB1 and activating E2F1-regulated genes. Interacts with host ATF7; the interaction enhances ATF7-mediated viral transactivation activity which requires the zinc binding domains of both proteins. Isoform early E1A 32 kDa protein and isoform early E1A 26 kDa protein interact (via N-terminus) with CUL1 and E3 ubiquitin ligase RBX1; these interactions inhibit RBX1-CUL1-dependent elongation reaction of ubiquitin chains and attenuate ubiquitination of SCF(FBXW7) target proteins. Interacts (via PXLXP motif) with host ZMYND11/BS69 (via MYND-type zinc finger); this interaction inhibits E1A mediated transactivation. Interacts with host EP300; this interaction stimulates the acetylation of RB1 by recruiting EP300 and RB1 into a multimeric-protein complex. Interacts with host CTBP1 and CTBP2; this interaction seems to potentiate viral replication. Interacts with host DCAF7. Interacts with host DYRK1A. Interacts with host KPNA4; this interaction allows E1A import into the host nucleus. Interacts with host EP400; this interaction stabilizes MYC. Interacts with host TBP protein; this interaction probably disrupts the TBP-TATA complex. Interacts (via LXCXE motif) with host TMEM173/STING; this interaction impairs the ability of TMEM173/STING to sense cytosolic DNA and promote the production of type I interferon (IFN-alpha and IFN-beta). Interacts (via C-terminus) with host ZBED1/hDREF (via C-terminus); the interaction is direct.

It localises to the host nucleus. Its function is as follows. Plays a role in viral genome replication by driving entry of quiescent cells into the cell cycle. Stimulation of progression from G1 to S phase allows the virus to efficiently use the cellular DNA replicating machinery to achieve viral genome replication. E1A protein has both transforming and trans-activating activities. Induces the disassembly of the E2F1 transcription factor from RB1 by direct competition for the same binding site on RB1, with subsequent transcriptional activation of E2F1-regulated S-phase genes and of the E2 region of the adenoviral genome. Release of E2F1 leads to the ARF-mediated inhibition of MDM2 and causes TP53/p53 to accumulate because it is not targeted for degradation by MDM2-mediated ubiquitination anymore. This increase in TP53, in turn, would arrest the cell proliferation and direct its death but this effect is counteracted by the viral protein E1B-55K. Inactivation of the ability of RB1 to arrest the cell cycle is critical for cellular transformation, uncontrolled cellular growth and proliferation induced by viral infection. Interaction with RBX1 and CUL1 inhibits ubiquitination of the proteins targeted by SCF(FBXW7) ubiquitin ligase complex, and may be linked to unregulated host cell proliferation. The tumorigenesis-restraining activity of E1A may be related to the disruption of the host CtBP-CtIP complex through the CtBP binding motif. Interaction with host TMEM173/STING impairs the ability of TMEM173/STING to sense cytosolic DNA and promote the production of type I interferon (IFN-alpha and IFN-beta). Promotes the sumoylation of host ZBED1/hDREF with SUMO1. This is Early E1A protein from Human adenovirus B serotype 7 (HAdV-7).